The chain runs to 570 residues: Proline--tRNA ligase (570 aa).

It belongs to the class-II aminoacyl-tRNA synthetase family. ProS type 1 subfamily. As to quaternary structure, homodimer.

The protein localises to the cytoplasm. It catalyses the reaction tRNA(Pro) + L-proline + ATP = L-prolyl-tRNA(Pro) + AMP + diphosphate. Its function is as follows. Catalyzes the attachment of proline to tRNA(Pro) in a two-step reaction: proline is first activated by ATP to form Pro-AMP and then transferred to the acceptor end of tRNA(Pro). As ProRS can inadvertently accommodate and process non-cognate amino acids such as alanine and cysteine, to avoid such errors it has two additional distinct editing activities against alanine. One activity is designated as 'pretransfer' editing and involves the tRNA(Pro)-independent hydrolysis of activated Ala-AMP. The other activity is designated 'posttransfer' editing and involves deacylation of mischarged Ala-tRNA(Pro). The misacylated Cys-tRNA(Pro) is not edited by ProRS. The polypeptide is Proline--tRNA ligase (Acidithiobacillus ferrooxidans (strain ATCC 23270 / DSM 14882 / CIP 104768 / NCIMB 8455) (Ferrobacillus ferrooxidans (strain ATCC 23270))).